We begin with the raw amino-acid sequence, 168 residues long: Ribosome maturation factor RimM (168 aa).

Residues 96 to 168 (VDEYYWGDLI…TIRVDWQKDW (73 aa)) form the PRC barrel domain.

This sequence belongs to the RimM family. In terms of assembly, binds ribosomal protein uS19.

The protein resides in the cytoplasm. Its function is as follows. An accessory protein needed during the final step in the assembly of 30S ribosomal subunit, possibly for assembly of the head region. Essential for efficient processing of 16S rRNA. May be needed both before and after RbfA during the maturation of 16S rRNA. It has affinity for free ribosomal 30S subunits but not for 70S ribosomes. This chain is Ribosome maturation factor RimM, found in Aromatoleum aromaticum (strain DSM 19018 / LMG 30748 / EbN1) (Azoarcus sp. (strain EbN1)).